A 524-amino-acid polypeptide reads, in one-letter code: RNA-splicing ligase RtcB homolog 1 (524 aa).

Mn(2+) is bound by residues Asp-141, Cys-144, His-249, His-281, and His-372. Residue 248-252 (NHYLE) coordinates GMP. Residues 372–373 (HN), 421–424 (GGSM), Ser-428, 447–450 (HGAG), and Lys-523 contribute to the GMP site. His-447 serves as the catalytic GMP-histidine intermediate.

The protein belongs to the RtcB family. Catalytic component of the tRNA-splicing ligase complex. Mn(2+) is required as a cofactor.

It catalyses the reaction a 3'-end 3'-phospho-ribonucleotide-RNA + a 5'-end dephospho-ribonucleoside-RNA + GTP = a ribonucleotidyl-ribonucleotide-RNA + GMP + diphosphate. The enzyme catalyses a 3'-end 2',3'-cyclophospho-ribonucleotide-RNA + a 5'-end dephospho-ribonucleoside-RNA + GTP + H2O = a ribonucleotidyl-ribonucleotide-RNA + GMP + diphosphate + H(+). Functionally, catalytic subunit of the tRNA-splicing ligase complex that acts by directly joining spliced tRNA halves to mature-sized tRNAs by incorporating the precursor-derived splice junction phosphate into the mature tRNA as a canonical 3',5'-phosphodiester. May act as an RNA ligase with broad substrate specificity, and may function toward other RNAs. In Entamoeba histolytica (strain ATCC 30459 / HM-1:IMSS / ABRM), this protein is RNA-splicing ligase RtcB homolog 1.